A 294-amino-acid chain; its full sequence is Homeobox protein HD1 (294 aa).

An ELK domain is found at 197-217; that stretch reads ELKLELKQGFKSRIEDVREEI. The segment at residues 218 to 281 is a DNA-binding region (homeobox; TALE-type); sequence MRKRRAGKLP…NQRKRNWHNN (64 aa).

The protein belongs to the TALE/KNOX homeobox family. As to expression, in roots, stems and cotyledons of one-week old seedlings. In mature plants, in young leaves from first level below flowers as well as in flower buds and open flowers.

The protein resides in the nucleus. Possible developmental regulator. This chain is Homeobox protein HD1 (HD1), found in Brassica napus (Rape).